The following is a 528-amino-acid chain: MPTPDATTPQAKGFRRAVSELDAKQAEAIMVRGQGAPGPSLTGSPWPGTAAPAASYTPTPRSPRFIGRRQSLIEDARKEREAAVAAAAAAVPSEPGDPLEAVAFEEKEGKAVLNLLFSPRATKPSALSRAVKVFETFEAKIHHLETRPAQRPRAGGPHLEYFVRLEVRRGDLAALLSGVRQVSEDVRSPAGPKVPWFPRKVSELDKCHHLVTKFDPDLDLDHPGFSDQVYRQRRKLIAEIAFQYRHGDPIPRVEYTAEEIATWKEVYTTLKGLYATHACGEHLEAFALLERFSGYREDNIPQLEDVSRFLKERTGFQLRPVAGLLSARDFLASLAFRVFQCTQYIRHASSPMHSPEPDCCHELLGHVPMLADRTFAQFSQDIGLASLGASDEEIEKLSTLYWFTVEFGLCKQNGEVKAYGAGLLSSYGELLHCLSEEPEIRAFDPEAAAVQPYQDQTYQSVYFVSESFSDAKDKLRSYASRIQRPFSVKFDPYTLAIDVLDSPQAVRRSLEGVQDELDTLAHALSAIG.

A Phosphoserine; by CaMK2 modification is found at Ser-19. The interval 33-65 (GQGAPGPSLTGSPWPGTAAPAASYTPTPRSPRF) is disordered. Over residues 47-59 (PGTAAPAASYTPT) the composition is skewed to low complexity. A Phosphoserine modification is found at Ser-62. Ser-71 carries the post-translational modification Phosphoserine; by CaMK2 and PKA. 3 residues coordinate Fe cation: His-361, His-366, and Glu-406. Phosphoserine is present on Ser-502.

Belongs to the biopterin-dependent aromatic amino acid hydroxylase family. As to quaternary structure, homotetramer. Interacts (when phosphorylated at Ser-19) with YWHAG; one YWHAG dimer binds to one TH tetramer and this interaction may influence the phosphorylation and dephosphorylation of other sites. Interacts with NT5DC2; the interaction results in reduced phosphorylation and decreased catalytic activity of TH. It depends on Fe(2+) as a cofactor. In terms of processing, phosphorylated on Ser-19, Ser-62 and Ser-71 by several protein kinases with different site specificities. Phosphorylation at Ser-62 and Ser-71 leads to an increase of TH activity. Phosphorylation at Ser-71 activates the enzyme and also counteracts the feedback inhibition of TH by catecholamines. Phosphorylation of Ser-19 and Ser-62 triggers the proteasomal degradation of TH through the ubiquitin-proteasome pathway. Phosphorylation at Ser-62 facilitates transport of TH from the soma to the nerve terminals via the microtubule network. Phosphorylation at Ser-19 induces the high-affinity binding to the 14-3-3 protein YWHAG; this interaction may influence the phosphorylation and dephosphorylation of other sites. Ser-19 increases the phosphorylation at Ser-71 in a hierarchical manner, leading to increased activity. Mainly expressed in the brain and adrenal glands.

It is found in the cytoplasm. The protein localises to the perinuclear region. The protein resides in the nucleus. It localises to the cell projection. Its subcellular location is the axon. It is found in the cytoplasmic vesicle. The protein localises to the secretory vesicle. The protein resides in the synaptic vesicle. It carries out the reaction (6R)-L-erythro-5,6,7,8-tetrahydrobiopterin + L-tyrosine + O2 = (4aS,6R)-4a-hydroxy-L-erythro-5,6,7,8-tetrahydrobiopterin + L-dopa. It functions in the pathway catecholamine biosynthesis; dopamine biosynthesis; dopamine from L-tyrosine: step 1/2. With respect to regulation, inhibited in feedback fashion by the catecholamine neurotransmitters, especially by dopamine in competition with tetrahydrobiopterin. Phosphorylation of several Ser/Thr residues in the N-terminus regulates the catalytic activity. Ser-62 and Ser-71 are readily phosphorylated to activate the catalytic activity. A Cysteine modification induced by N-ethylmaleimide (NEM), inhibits tyrosine 3-monooxygenase activity through the modification of the Cys-207. Functionally, catalyzes the conversion of L-tyrosine to L-dihydroxyphenylalanine (L-Dopa), the rate-limiting step in the biosynthesis of catecholamines, dopamine, noradrenaline, and adrenaline. Uses tetrahydrobiopterin and molecular oxygen to convert tyrosine to L-Dopa. In addition to tyrosine, is able to catalyze the hydroxylation of phenylalanine and tryptophan with lower specificity. Positively regulates the regression of retinal hyaloid vessels during postnatal development. Its function is as follows. Lacks catalytic activity. The chain is Tyrosine 3-monooxygenase from Homo sapiens (Human).